Here is a 143-residue protein sequence, read N- to C-terminus: Flagellar assembly factor FliW (143 aa).

It belongs to the FliW family. Interacts with translational regulator CsrA and flagellin(s).

The protein localises to the cytoplasm. Acts as an anti-CsrA protein, binds CsrA and prevents it from repressing translation of its target genes, one of which is flagellin. Binds to flagellin and participates in the assembly of the flagellum. This Bacillus licheniformis (strain ATCC 14580 / DSM 13 / JCM 2505 / CCUG 7422 / NBRC 12200 / NCIMB 9375 / NCTC 10341 / NRRL NRS-1264 / Gibson 46) protein is Flagellar assembly factor FliW.